The chain runs to 368 residues: Probable endopolygalacturonase A (368 aa).

The N-terminal stretch at 1 to 18 is a signal peptide; sequence MRSVELLSLAALGSLVAA. A propeptide spanning residues 19-31 is cleaved from the precursor; it reads APAPSRVSDLTKR. The cysteines at positions 35 and 50 are disulfide-linked. PbH1 repeat units lie at residues 140–162, 167–192, 193–214, 215–235, 244–265, 273–295, and 307–352; these read LEDS…SVQA, LIDI…DISE, STGV…AINS, GENI…SIGS, VKNV…RIKT, VSEV…VIEQ, and TTGV…DITG. Catalysis depends on aspartate 207, which acts as the Proton donor. Cysteine 209 and cysteine 225 are oxidised to a cystine. Histidine 229 is a catalytic residue. An N-linked (GlcNAc...) asparagine glycan is attached at asparagine 246. 2 disulfide bridges follow: cysteine 335–cysteine 340 and cysteine 359–cysteine 368.

This sequence belongs to the glycosyl hydrolase 28 family.

The protein resides in the secreted. It carries out the reaction (1,4-alpha-D-galacturonosyl)n+m + H2O = (1,4-alpha-D-galacturonosyl)n + (1,4-alpha-D-galacturonosyl)m.. Its function is as follows. Involved in maceration and soft-rotting of plant tissue. Hydrolyzes the 1,4-alpha glycosidic bonds of de-esterified pectate in the smooth region of the plant cell wall. This chain is Probable endopolygalacturonase A (pgaA), found in Neosartorya fischeri (strain ATCC 1020 / DSM 3700 / CBS 544.65 / FGSC A1164 / JCM 1740 / NRRL 181 / WB 181) (Aspergillus fischerianus).